The primary structure comprises 157 residues: Small ribosomal subunit protein uS7 (157 aa).

The protein belongs to the universal ribosomal protein uS7 family. As to quaternary structure, part of the 30S ribosomal subunit. Contacts proteins S9 and S11.

In terms of biological role, one of the primary rRNA binding proteins, it binds directly to 16S rRNA where it nucleates assembly of the head domain of the 30S subunit. Is located at the subunit interface close to the decoding center, probably blocks exit of the E-site tRNA. The polypeptide is Small ribosomal subunit protein uS7 (Variovorax paradoxus (strain S110)).